A 237-amino-acid chain; its full sequence is Ubiquinone/menaquinone biosynthesis C-methyltransferase UbiE (237 aa).

2 residues coordinate S-adenosyl-L-methionine: Thr-60 and Asp-80.

The protein belongs to the class I-like SAM-binding methyltransferase superfamily. MenG/UbiE family.

The catalysed reaction is a 2-demethylmenaquinol + S-adenosyl-L-methionine = a menaquinol + S-adenosyl-L-homocysteine + H(+). It catalyses the reaction a 2-methoxy-6-(all-trans-polyprenyl)benzene-1,4-diol + S-adenosyl-L-methionine = a 5-methoxy-2-methyl-3-(all-trans-polyprenyl)benzene-1,4-diol + S-adenosyl-L-homocysteine + H(+). The protein operates within quinol/quinone metabolism; menaquinone biosynthesis; menaquinol from 1,4-dihydroxy-2-naphthoate: step 2/2. Its pathway is cofactor biosynthesis; ubiquinone biosynthesis. Its function is as follows. Methyltransferase required for the conversion of demethylmenaquinol (DMKH2) to menaquinol (MKH2) and the conversion of 2-polyprenyl-6-methoxy-1,4-benzoquinol (DDMQH2) to 2-polyprenyl-3-methyl-6-methoxy-1,4-benzoquinol (DMQH2). The chain is Ubiquinone/menaquinone biosynthesis C-methyltransferase UbiE from Syntrophotalea carbinolica (strain DSM 2380 / NBRC 103641 / GraBd1) (Pelobacter carbinolicus).